A 421-amino-acid polypeptide reads, in one-letter code: N-succinylarginine dihydrolase (421 aa).

Residues 19–28 (AGLSLGNLAS), Asn105, and 132–133 (HR) each bind substrate. Residue Glu167 is part of the active site. Residue Arg199 participates in substrate binding. Residue His235 is part of the active site. Substrate contacts are provided by Asp237 and Asn346. Cys352 (nucleophile) is an active-site residue.

Belongs to the succinylarginine dihydrolase family. Homodimer.

The enzyme catalyses N(2)-succinyl-L-arginine + 2 H2O + 2 H(+) = N(2)-succinyl-L-ornithine + 2 NH4(+) + CO2. Its pathway is amino-acid degradation; L-arginine degradation via AST pathway; L-glutamate and succinate from L-arginine: step 2/5. Functionally, catalyzes the hydrolysis of N(2)-succinylarginine into N(2)-succinylornithine, ammonia and CO(2). The sequence is that of N-succinylarginine dihydrolase from Novosphingobium aromaticivorans (strain ATCC 700278 / DSM 12444 / CCUG 56034 / CIP 105152 / NBRC 16084 / F199).